A 642-amino-acid chain; its full sequence is Threonine--tRNA ligase (642 aa).

In terms of domain architecture, TGS spans 1–61; that stretch reads MPVITLPDGS…ETDAELSIIT (61 aa). The interval 243–534 is catalytic; that stretch reads DHRKIGKQLD…LIEEYAGRFP (292 aa). Zn(2+)-binding residues include Cys-334, His-385, and His-511.

It belongs to the class-II aminoacyl-tRNA synthetase family. As to quaternary structure, homodimer. Requires Zn(2+) as cofactor.

It is found in the cytoplasm. The enzyme catalyses tRNA(Thr) + L-threonine + ATP = L-threonyl-tRNA(Thr) + AMP + diphosphate + H(+). Its function is as follows. Catalyzes the attachment of threonine to tRNA(Thr) in a two-step reaction: L-threonine is first activated by ATP to form Thr-AMP and then transferred to the acceptor end of tRNA(Thr). Also edits incorrectly charged L-seryl-tRNA(Thr). This is Threonine--tRNA ligase from Shewanella sp. (strain W3-18-1).